Here is a 60-residue protein sequence, read N- to C-terminus: Large ribosomal subunit protein bL32 (60 aa).

Residues 1-60 (MAVQQNKKSRSARDMRRSHDALESNALSVEKSTGEVHLRHHVSPDGFYRGRKVVDKGSDE) form a disordered region. Residues 11-22 (SARDMRRSHDAL) show a composition bias toward basic and acidic residues.

Belongs to the bacterial ribosomal protein bL32 family.

The chain is Large ribosomal subunit protein bL32 from Pseudomonas aeruginosa (strain LESB58).